Reading from the N-terminus, the 330-residue chain is Cathepsin S (330 aa).

Positions 1-17 are cleaved as a signal peptide; it reads MAVLGAPGVLCDNGATA. A propeptide spans 18–112 (activation peptide); that stretch reads ERPTLDHHWD…GTLKSSSNQT (95 aa). Residues N100 and N110 are each glycosylated (N-linked (GlcNAc...) asparagine). 4 disulfide bridges follow: C124–C222, C134–C179, C168–C211, and C271–C319. The active site involves C137. Residues H277 and N297 contribute to the active site.

Belongs to the peptidase C1 family. Monomer. Highest levels occur in the ileum followed by spleen, brain, thyroid, ovary and uterus. Low levels are found in the liver, kidney, jejunum and lung with lowest levels in the heart.

It localises to the lysosome. The protein resides in the secreted. The protein localises to the cytoplasmic vesicle. Its subcellular location is the phagosome. The enzyme catalyses Similar to cathepsin L, but with much less activity on Z-Phe-Arg-|-NHMec, and more activity on the Z-Val-Val-Arg-|-Xaa compound.. In terms of biological role, thiol protease. Key protease responsible for the removal of the invariant chain from MHC class II molecules and MHC class II antigen presentation. The bond-specificity of this proteinase is in part similar to the specificities of cathepsin L. The sequence is that of Cathepsin S (Ctss) from Rattus norvegicus (Rat).